Reading from the N-terminus, the 255-residue chain is Pyridoxine 5'-phosphate synthase (255 aa).

3-amino-2-oxopropyl phosphate-binding residues include Asn8 and Arg19. The active-site Proton acceptor is His44. Arg46 and His51 together coordinate 1-deoxy-D-xylulose 5-phosphate. Glu74 acts as the Proton acceptor in catalysis. Residue Thr111 coordinates 1-deoxy-D-xylulose 5-phosphate. The active-site Proton donor is the His202. 3-amino-2-oxopropyl phosphate-binding positions include Asp203 and 225 to 226 (GH).

This sequence belongs to the PNP synthase family. In terms of assembly, homooctamer; tetramer of dimers.

It is found in the cytoplasm. It catalyses the reaction 3-amino-2-oxopropyl phosphate + 1-deoxy-D-xylulose 5-phosphate = pyridoxine 5'-phosphate + phosphate + 2 H2O + H(+). It participates in cofactor biosynthesis; pyridoxine 5'-phosphate biosynthesis; pyridoxine 5'-phosphate from D-erythrose 4-phosphate: step 5/5. In terms of biological role, catalyzes the complicated ring closure reaction between the two acyclic compounds 1-deoxy-D-xylulose-5-phosphate (DXP) and 3-amino-2-oxopropyl phosphate (1-amino-acetone-3-phosphate or AAP) to form pyridoxine 5'-phosphate (PNP) and inorganic phosphate. The chain is Pyridoxine 5'-phosphate synthase from Xanthomonas oryzae pv. oryzae (strain PXO99A).